The sequence spans 217 residues: uncharacterized protein (217 aa).

6 helical membrane-spanning segments follow: residues 13–35, 50–68, 75–94, 109–131, 152–174, and 194–216; these read IWLTSTLLAMKYLTPLNLAIALL, FSLVFPILLSALAAYILYL, FLLAYSILFIALKFVNEWRI, MMALAYGAGLMEILAPLTLLFSL, YLAIIPLALIFYILSHPVLAAAV, and GFSLLFLNLLFVVGFLALDFAGL.

It is found in the cell membrane. This is an uncharacterized protein from Archaeoglobus fulgidus (strain ATCC 49558 / DSM 4304 / JCM 9628 / NBRC 100126 / VC-16).